The sequence spans 88 residues: Translation initiation factor IF-1 1 (88 aa).

The 72-residue stretch at 1 to 72 (MSKEDMIELE…TKGRINFRHP (72 aa)) folds into the S1-like domain. The interval 66–88 (RINFRHPTANPGAGPRPSHHHRR) is disordered.

The protein belongs to the IF-1 family. In terms of assembly, component of the 30S ribosomal translation pre-initiation complex which assembles on the 30S ribosome in the order IF-2 and IF-3, IF-1 and N-formylmethionyl-tRNA(fMet); mRNA recruitment can occur at any time during PIC assembly.

The protein localises to the cytoplasm. In terms of biological role, one of the essential components for the initiation of protein synthesis. Stabilizes the binding of IF-2 and IF-3 on the 30S subunit to which N-formylmethionyl-tRNA(fMet) subsequently binds. Helps modulate mRNA selection, yielding the 30S pre-initiation complex (PIC). Upon addition of the 50S ribosomal subunit IF-1, IF-2 and IF-3 are released leaving the mature 70S translation initiation complex. The chain is Translation initiation factor IF-1 1 from Chromobacterium violaceum (strain ATCC 12472 / DSM 30191 / JCM 1249 / CCUG 213 / NBRC 12614 / NCIMB 9131 / NCTC 9757 / MK).